The chain runs to 104 residues: uncharacterized protein (104 aa).

The protein localises to the mitochondrion. This is an uncharacterized protein from Claviceps purpurea (Ergot fungus).